A 267-amino-acid polypeptide reads, in one-letter code: Hydroxyethylthiazole kinase (267 aa).

Methionine 51 lines the substrate pocket. 2 residues coordinate ATP: arginine 127 and serine 173. Alanine 200 contacts substrate.

The protein belongs to the Thz kinase family. The cofactor is Mg(2+).

The catalysed reaction is 5-(2-hydroxyethyl)-4-methylthiazole + ATP = 4-methyl-5-(2-phosphooxyethyl)-thiazole + ADP + H(+). The protein operates within cofactor biosynthesis; thiamine diphosphate biosynthesis; 4-methyl-5-(2-phosphoethyl)-thiazole from 5-(2-hydroxyethyl)-4-methylthiazole: step 1/1. Functionally, catalyzes the phosphorylation of the hydroxyl group of 4-methyl-5-beta-hydroxyethylthiazole (THZ). The protein is Hydroxyethylthiazole kinase of Psychromonas ingrahamii (strain DSM 17664 / CCUG 51855 / 37).